A 947-amino-acid chain; its full sequence is Regulator of spindle assembly protein 2 (947 aa).

Disordered stretches follow at residues 20-148 (EKPA…LSEQ) and 173-211 (SPHE…LKPR). Basic and acidic residues-rich tracts occupy residues 30–50 (PKYR…EGEK) and 62–84 (TRED…DLRI). Composition is skewed to polar residues over residues 90-102 (SATP…SDQY) and 179-188 (QQTIQESSEQ). The stretch at 276 to 320 (IIAEEAKKRRNEAEAVRKLIEVETQNAKKRAVIQELKDRIDKLTQ) forms a coiled coil. Disordered stretches follow at residues 407 to 453 (KINP…RRIG), 575 to 594 (ERES…LEIP), 600 to 662 (SVTT…GLII), and 681 to 705 (EQSL…FLLD). The segment covering 411 to 422 (SSQLNQQSSSDA) has biased composition (low complexity). Residues 430–449 (EASTQMTSRLAESAMTQTSP) are compositionally biased toward polar residues. Residues 563-591 (AGLSHYLEQVKKERESMEAQESESESMEL) adopt a coiled-coil conformation. Residues 580-590 (EAQESESESME) are compositionally biased toward acidic residues. Over residues 645-657 (FEHEIEEHKEPEK) the composition is skewed to basic and acidic residues.

As to quaternary structure, interacts with phosphatase regulatory subunit rsa-1 and tpxl-1. May interact with spd-5. May interact with sys-1.

Its subcellular location is the cytoplasm. The protein resides in the cytoskeleton. It localises to the microtubule organizing center. It is found in the centrosome. Recruits rsa-1 and, thereby, phosphatase let-92/paa-1 complex to the centrosomes. Recruits sys-1/beta-catenin to mitotic centrosomes during the first embryonic cell divisions. The polypeptide is Regulator of spindle assembly protein 2 (Caenorhabditis elegans).